The chain runs to 194 residues: Outer membrane protein A (194 aa).

The N-terminal stretch at Met-1–Ala-24 is a signal peptide. Residues Trp-30–Trp-38 traverse the membrane as a beta stranded segment. Positions Met-77–Arg-193 constitute an OmpA-like domain.

The protein belongs to the outer membrane OOP (TC 1.B.6) superfamily.

It localises to the cell outer membrane. In terms of biological role, structural protein that may protect the integrity of the bacterium. The polypeptide is Outer membrane protein A (Bordetella avium).